A 209-amino-acid polypeptide reads, in one-letter code: uncharacterized protein (209 aa).

Positions 1–17 (MKKLVTGLLALSLFLAA) are cleaved as a signal peptide. Positions 17 to 106 (ACGQDSDQQK…SGQTTNNQKS (90 aa)) are disordered. The N-palmitoyl cysteine moiety is linked to residue cysteine 18. Cysteine 18 carries S-diacylglycerol cysteine lipidation. A compositionally biased stretch (basic and acidic residues) spans 23–70 (DQQKDSNKEKDDKAKTEQQDKKTNDSSKDKKDNKDDSKDVNKDNKDNS). Over residues 71-106 (ANDNQQQSNSNATNNDQNQTNNNQSNSGQTTNNQKS) the composition is skewed to low complexity.

The protein localises to the cell membrane. This is an uncharacterized protein from Staphylococcus aureus (strain MRSA252).